Here is a 256-residue protein sequence, read N- to C-terminus: uncharacterized protein (256 aa).

A signal peptide spans M1–S22. C23 is lipidated: N-palmitoyl cysteine. C23 is lipidated: S-diacylglycerol cysteine.

Belongs to the staphylococcal tandem lipoprotein family.

It is found in the cell membrane. This is an uncharacterized protein from Staphylococcus aureus (strain MRSA252).